We begin with the raw amino-acid sequence, 426 residues long: UDP-N-acetylglucosamine 1-carboxyvinyltransferase (426 aa).

Position 22–23 (Lys22–Asn23) interacts with phosphoenolpyruvate. Arg93 provides a ligand contact to UDP-N-acetyl-alpha-D-glucosamine. Cys117 (proton donor) is an active-site residue. 2-(S-cysteinyl)pyruvic acid O-phosphothioketal is present on Cys117. Residues Lys162–Val165, Asp307, and Ile329 contribute to the UDP-N-acetyl-alpha-D-glucosamine site.

It belongs to the EPSP synthase family. MurA subfamily.

It localises to the cytoplasm. It carries out the reaction phosphoenolpyruvate + UDP-N-acetyl-alpha-D-glucosamine = UDP-N-acetyl-3-O-(1-carboxyvinyl)-alpha-D-glucosamine + phosphate. It functions in the pathway cell wall biogenesis; peptidoglycan biosynthesis. Cell wall formation. Adds enolpyruvyl to UDP-N-acetylglucosamine. The chain is UDP-N-acetylglucosamine 1-carboxyvinyltransferase from Haemophilus ducreyi (strain 35000HP / ATCC 700724).